A 292-amino-acid chain; its full sequence is Phosphatidylglycerol--prolipoprotein diacylglyceryl transferase (292 aa).

6 helical membrane passes run 25-45, 70-90, 101-121, 138-158, 193-213, and 255-275; these read IALHWYGLGYVVGILFAWWYA, FVVWSAISVVVGGRLGQVLVW, AIIAVWDGGMSFHGGFIGIII, FDIVAAGAPIGIGIVRICNFI, FMEGFLLFIILFIIIFAFKAL, and GFTYGMALSLPMLFFGIYLLL. Residue Arg153 coordinates a 1,2-diacyl-sn-glycero-3-phospho-(1'-sn-glycerol).

The protein belongs to the Lgt family.

Its subcellular location is the cell inner membrane. It catalyses the reaction L-cysteinyl-[prolipoprotein] + a 1,2-diacyl-sn-glycero-3-phospho-(1'-sn-glycerol) = an S-1,2-diacyl-sn-glyceryl-L-cysteinyl-[prolipoprotein] + sn-glycerol 1-phosphate + H(+). The protein operates within protein modification; lipoprotein biosynthesis (diacylglyceryl transfer). Functionally, catalyzes the transfer of the diacylglyceryl group from phosphatidylglycerol to the sulfhydryl group of the N-terminal cysteine of a prolipoprotein, the first step in the formation of mature lipoproteins. The chain is Phosphatidylglycerol--prolipoprotein diacylglyceryl transferase from Bartonella quintana (strain Toulouse) (Rochalimaea quintana).